A 511-amino-acid chain; its full sequence is Probable dolichyl pyrophosphate Glc1Man9GlcNAc2 alpha-1,3-glucosyltransferase (511 aa).

Helical transmembrane passes span 4–24 (LFWHLVGIATGLKILLIPAYH), 94–112 (VYFQRLSVIVTDLVYVLGV), 124–144 (DTQQFFAASMLLLLNVGLIFV), 151–171 (YNGLLFGILLLSIGSLIRQRF), 210–230 (VVSAVGAVVKLLVVGLTPFAV), 300–320 (PAITPPVTFALTALFMLPILV), 332–352 (LVFLRAVVLCGCSSFVFGWHV), 356–370 (AILMVLLPLCLLTLV), 377–394 (YAYVLGIAGYFSLFPLLF), 432–452 (WLYMLGFMAIPLYEHLLSFLL), and 469–491 (YSALGVLYFFGAYYLYALGISWG).

The protein belongs to the ALG6/ALG8 glucosyltransferase family.

The protein localises to the endoplasmic reticulum membrane. It catalyses the reaction an alpha-D-Glc-(1-&gt;3)-alpha-D-Man-(1-&gt;2)-alpha-D-Man-(1-&gt;2)-alpha-D-Man-(1-&gt;3)-[alpha-D-Man-(1-&gt;2)-alpha-D-Man-(1-&gt;3)-[alpha-D-Man-(1-&gt;2)-alpha-D-Man-(1-&gt;6)]-alpha-D-Man-(1-&gt;6)]-beta-D-Man-(1-&gt;4)-beta-D-GlcNAc-(1-&gt;4)-alpha-D-GlcNAc-diphospho-di-trans,poly-cis-dolichol + a di-trans,poly-cis-dolichyl beta-D-glucosyl phosphate = an alpha-D-Glc-(1-&gt;3)-alpha-D-Glc-(1-&gt;3)-alpha-D-Man-(1-&gt;2)-alpha-D-Man-(1-&gt;2)-alpha-D-Man-(1-&gt;3)-[alpha-D-Man-(1-&gt;2)-alpha-D-Man-(1-&gt;3)-[alpha-D-Man-(1-&gt;2)-alpha-D-Man-(1-&gt;6)]-alpha-D-Man-(1-&gt;6)]-beta-D-Man-(1-&gt;4)-beta-D-GlcNAc-(1-&gt;4)-alpha-D-GlcNAc-diphospho-di-trans,poly-cis-dolichol + a di-trans,poly-cis-dolichyl phosphate + H(+). It participates in protein modification; protein glycosylation. Adds the second glucose residue to the lipid-linked oligosaccharide precursor for N-linked glycosylation. Transfers glucose from dolichyl phosphate glucose (Dol-P-Glc) onto the lipid-linked oligosaccharide Glc(1)Man(9)GlcNAc(2)-PP-Dol. Functions in developmental processes such as germband extension, the apical constriction of mesoderm precursor cells and ventral furrow formation in early embryogenesis prior to gastrulation. Involved in the glycosylation and intracellular distribution of shg (E-cadherin). Function in cell intercalation in the lateral epidermis during germband extension may be due to its effect on shg. The chain is Probable dolichyl pyrophosphate Glc1Man9GlcNAc2 alpha-1,3-glucosyltransferase from Drosophila melanogaster (Fruit fly).